A 325-amino-acid polypeptide reads, in one-letter code: 4-hydroxy-3-methylbut-2-enyl diphosphate reductase (325 aa).

Cys21 is a [4Fe-4S] cluster binding site. The (2E)-4-hydroxy-3-methylbut-2-enyl diphosphate site is built by His50 and His83. Dimethylallyl diphosphate-binding residues include His50 and His83. The isopentenyl diphosphate site is built by His50 and His83. Residue Cys105 participates in [4Fe-4S] cluster binding. A (2E)-4-hydroxy-3-methylbut-2-enyl diphosphate-binding site is contributed by His133. His133 provides a ligand contact to dimethylallyl diphosphate. His133 is a binding site for isopentenyl diphosphate. Glu135 (proton donor) is an active-site residue. Residue Thr173 coordinates (2E)-4-hydroxy-3-methylbut-2-enyl diphosphate. Residue Cys203 participates in [4Fe-4S] cluster binding. The (2E)-4-hydroxy-3-methylbut-2-enyl diphosphate site is built by Ser231, Ser232, Asn233, and Ser275. Residues Ser231, Ser232, Asn233, and Ser275 each contribute to the dimethylallyl diphosphate site. Residues Ser231, Ser232, Asn233, and Ser275 each contribute to the isopentenyl diphosphate site.

This sequence belongs to the IspH family. Requires [4Fe-4S] cluster as cofactor.

The catalysed reaction is isopentenyl diphosphate + 2 oxidized [2Fe-2S]-[ferredoxin] + H2O = (2E)-4-hydroxy-3-methylbut-2-enyl diphosphate + 2 reduced [2Fe-2S]-[ferredoxin] + 2 H(+). The enzyme catalyses dimethylallyl diphosphate + 2 oxidized [2Fe-2S]-[ferredoxin] + H2O = (2E)-4-hydroxy-3-methylbut-2-enyl diphosphate + 2 reduced [2Fe-2S]-[ferredoxin] + 2 H(+). It participates in isoprenoid biosynthesis; dimethylallyl diphosphate biosynthesis; dimethylallyl diphosphate from (2E)-4-hydroxy-3-methylbutenyl diphosphate: step 1/1. It functions in the pathway isoprenoid biosynthesis; isopentenyl diphosphate biosynthesis via DXP pathway; isopentenyl diphosphate from 1-deoxy-D-xylulose 5-phosphate: step 6/6. In terms of biological role, catalyzes the conversion of 1-hydroxy-2-methyl-2-(E)-butenyl 4-diphosphate (HMBPP) into a mixture of isopentenyl diphosphate (IPP) and dimethylallyl diphosphate (DMAPP). Acts in the terminal step of the DOXP/MEP pathway for isoprenoid precursor biosynthesis. This chain is 4-hydroxy-3-methylbut-2-enyl diphosphate reductase, found in Bordetella pertussis (strain Tohama I / ATCC BAA-589 / NCTC 13251).